Here is a 377-residue protein sequence, read N- to C-terminus: Histone deacetylase 8 (377 aa).

Positions 14 to 324 are histone deacetylase; it reads LVPVYIYSPE…WTYLTGVILG (311 aa). Ser39 is subject to Phosphoserine. Asp101 is a binding site for substrate. The Proton acceptor role is filled by His143. Gly151 provides a ligand contact to substrate. Residues Asp178, His180, and Asp267 each coordinate a divalent metal cation. Residue Tyr306 participates in substrate binding.

It belongs to the histone deacetylase family. HD type 1 subfamily. In terms of assembly, interacts with PEPB2-MYH11, a fusion protein consisting of the 165 N-terminal residues of CBF-beta (PEPB2) with the tail region of MYH11 produced by the inversion Inv(16)(p13q22), a translocation associated with acute myeloid leukemia of M4EO subtype. The PEPB2-MYH1 fusion protein also interacts with RUNX1, a well known transcriptional regulator, suggesting that the interaction with HDAC8 may participate in the conversion of RUNX1 into a constitutive transcriptional repressor. Interacts with CBFA2T3. Interacts with phosphorylated SMG5/EST1B; this interaction protects SMG5 from ubiquitin-mediated degradation. Associates with alpha-SMA (smooth muscle alpha-actin). Requires a divalent metal cation as cofactor. In terms of processing, phosphorylated by PKA on serine 39. Phosphorylation reduces deacetylase activity observed preferentially on histones H3 and H4. As to expression, weakly expressed in most tissues. Expressed at higher level in heart, brain, kidney and pancreas and also in liver, lung, placenta, prostate and kidney.

It is found in the nucleus. The protein resides in the chromosome. It localises to the cytoplasm. The enzyme catalyses N(6)-acetyl-L-lysyl-[histone] + H2O = L-lysyl-[histone] + acetate. It catalyses the reaction N(6)-acetyl-L-lysyl-[protein] + H2O = L-lysyl-[protein] + acetate. The catalysed reaction is N(6)-(2E)-butenoyl-L-lysyl-[protein] + H2O = (2E)-2-butenoate + L-lysyl-[protein]. Its activity is inhibited by trichostatin A (TSA), suberoylanilide hydroxamic acid (SAHA), 3-(1-methyl-4-phenylacetyl-1H-2-pyrrolyl)-N-hydroxy-2-propenamide (APHA), 4-dimethylamino-N-(6-hydroxycarbamoyethyl)benzamide-N-hydroxy-7-(4-dimethylaminobenzoyl)aminoheptanamide (MS-344), 5-(4-methyl-benzoylamino)-biphenyl-3,4'-dicarboxylic acid 3-dimethylamide 4'-hydroxyamide (CRA-A) and butyrate. In terms of biological role, histone deacetylase that catalyzes the deacetylation of lysine residues on the N-terminal part of the core histones (H2A, H2B, H3 and H4). Histone deacetylation gives a tag for epigenetic repression and plays an important role in transcriptional regulation, cell cycle progression and developmental events. Histone deacetylases act via the formation of large multiprotein complexes. Also involved in the deacetylation of cohesin complex protein SMC3 regulating release of cohesin complexes from chromatin. May play a role in smooth muscle cell contractility. In addition to protein deacetylase activity, also has protein-lysine deacylase activity: acts as a protein decrotonylase by mediating decrotonylation ((2E)-butenoyl) of histones. This Homo sapiens (Human) protein is Histone deacetylase 8.